The sequence spans 64 residues: DNA gyrase inhibitor YacG (64 aa).

Zn(2+) contacts are provided by C9, C12, C28, and C32. Residues 45–64 (KRIPSAGDLSDSDDWSEQQP) form a disordered region. Residues 54-64 (SDSDDWSEQQP) are compositionally biased toward acidic residues.

The protein belongs to the DNA gyrase inhibitor YacG family. Interacts with GyrB. Zn(2+) serves as cofactor.

Inhibits all the catalytic activities of DNA gyrase by preventing its interaction with DNA. Acts by binding directly to the C-terminal domain of GyrB, which probably disrupts DNA binding by the gyrase. The polypeptide is DNA gyrase inhibitor YacG (Klebsiella pneumoniae subsp. pneumoniae (strain ATCC 700721 / MGH 78578)).